Here is a 34-residue protein sequence, read N- to C-terminus: Small ribosomal subunit protein uS2c (34 aa).

Belongs to the universal ribosomal protein uS2 family.

The protein resides in the plastid. It is found in the chloroplast. The protein is Small ribosomal subunit protein uS2c (rps2) of Ochrosphaera neapolitana.